The following is a 326-amino-acid chain: Ribonuclease Z (326 aa).

7 residues coordinate Zn(2+): His62, His64, Asp66, His67, His140, Asp211, and His269. Asp66 acts as the Proton acceptor in catalysis.

The protein belongs to the RNase Z family. As to quaternary structure, homodimer. Zn(2+) is required as a cofactor.

It carries out the reaction Endonucleolytic cleavage of RNA, removing extra 3' nucleotides from tRNA precursor, generating 3' termini of tRNAs. A 3'-hydroxy group is left at the tRNA terminus and a 5'-phosphoryl group is left at the trailer molecule.. Zinc phosphodiesterase, which displays some tRNA 3'-processing endonuclease activity. Probably involved in tRNA maturation, by removing a 3'-trailer from precursor tRNA. The chain is Ribonuclease Z from Synechocystis sp. (strain ATCC 27184 / PCC 6803 / Kazusa).